A 479-amino-acid chain; its full sequence is GTPase Der (479 aa).

2 EngA-type G domains span residues 3–167 (FKVA…GEAR) and 208–383 (MRIA…KVWN). GTP is bound by residues 9–16 (GRPNVGKS), 56–60 (DTAGF), 119–122 (NKAE), 214–221 (GRPNAGKS), 261–265 (DTAGM), and 326–329 (NKWD). The KH-like domain occupies 384-468 (SRVSTGKLNR…PIRIALRTSD (85 aa)).

The protein belongs to the TRAFAC class TrmE-Era-EngA-EngB-Septin-like GTPase superfamily. EngA (Der) GTPase family. In terms of assembly, associates with the 50S ribosomal subunit.

GTPase that plays an essential role in the late steps of ribosome biogenesis. The sequence is that of GTPase Der from Mesorhizobium japonicum (strain LMG 29417 / CECT 9101 / MAFF 303099) (Mesorhizobium loti (strain MAFF 303099)).